Consider the following 137-residue polypeptide: MTKYTSVNSSLPSLPRQTTPTRPATQTGRWDRMGMQTGNTPSSPLGFETKGSLNGSPTLRTTLDTSLSGTRSHPALRATRWMMGVNDIDSIQGDEDHPHDPGPDSDAKKRCASGKAPKDRPTSSVAVASTIRPPCCG.

Polar residues predominate over residues 1–12 (MTKYTSVNSSLP). Residues 1–137 (MTKYTSVNSS…ASTIRPPCCG (137 aa)) are disordered. Over residues 15–27 (PRQTTPTRPATQT) the composition is skewed to low complexity. Residues 51 to 71 (GSLNGSPTLRTTLDTSLSGTR) are compositionally biased toward polar residues. A compositionally biased stretch (basic and acidic residues) spans 94–109 (DEDHPHDPGPDSDAKK).

The protein operates within secondary metabolite biosynthesis. Functionally, part of the gene cluster that mediates the biosynthesis of the tetramic acid Sch210972, a potential anti-HIV fungal natural product that contains a decalin core. The PKS module of cghG together with the enoylreductase cghC catalyze the formation of the polyketide unit which is then conjugated to 4-hydroxyl-4-methyl glutamate (HMG) by the condensation domain of the cghG NRPS module. One unique structural feature of Sch210972 is the tetramic acid motif proposed to be derived from the non-proteinogenic amino acid HMG, by a Dieckmann-type condensation catalyzed by the reductase domain of cghG. The aldolase cghB catalyzes the aldol condensation of 2 molecules of pyruvic acid to yield the intermediate 4-hydroxyl-4-methyl-2-oxoglutarate (HMOG), which can then be stereoselectively transaminated by an unidentified enzyme to form HMG. The Diels-Alderase cghA then uses the Dieckmann product released by cghG as substrate and catalyzes the Diels-Alder cycloaddition to form the decalin ring of Sch210972. CghA also suppresses the nonenzymatic formation of the alternative stereoisomer. This chain is Sch210972 biosynthesis cluster protein E, found in Chaetomium globosum (strain ATCC 6205 / CBS 148.51 / DSM 1962 / NBRC 6347 / NRRL 1970) (Soil fungus).